We begin with the raw amino-acid sequence, 673 residues long: Beta-galactosidase GalA (673 aa).

A substrate-binding site is contributed by Arg-105. Cys-109 is a Zn(2+) binding site. Asn-143 is a binding site for substrate. Glu-144 functions as the Proton donor in the catalytic mechanism. Cys-149, Cys-151, and Cys-154 together coordinate Zn(2+). The active-site Nucleophile is Glu-308. Substrate is bound by residues Trp-316 and 356 to 359 (EKFH).

It belongs to the glycosyl hydrolase 42 family. As to quaternary structure, homodimer.

It catalyses the reaction Hydrolysis of terminal non-reducing beta-D-galactose residues in beta-D-galactosides.. With respect to regulation, inhibited by hydrolysis end products D-galactose and D-glucose. The hydrolysis of o-nitrophenyl-beta-D-galactopyranoside (ONPG) is slightly activated by monovalent ions, Na(+) and K(+). Concentrations of these ions in the range of 1-100 mM exert the stimulating effects. The presence of 1 mM Mn(2+) together with the presence of 10 mM Na(+) slightly stimulates the activity, while presence of 10 mM Mn(2+) inhibits the activity by about 40%. Functionally, catalyzes the hydrolysis of lactose to its constituent monosaccharides glucose and galactose. Possesses a low level of transgalactosylation activity for the production of galacto-oligosaccharides (GOS) from lactose. The protein is Beta-galactosidase GalA of Bacillus licheniformis (strain ATCC 14580 / DSM 13 / JCM 2505 / CCUG 7422 / NBRC 12200 / NCIMB 9375 / NCTC 10341 / NRRL NRS-1264 / Gibson 46).